A 458-amino-acid chain; its full sequence is Ammonium transporter Rh type B (458 aa).

The Cytoplasmic segment spans residues 1–13 (MAKSPRRVAGRRL). A helical membrane pass occupies residues 14-34 (LLPLLCLFFQGATAILFAIFV). At 35 to 61 (RYDQQTDAALWHGGNHSNADNEFYFRY) the chain is on the extracellular side. The N-linked (GlcNAc...) asparagine glycan is linked to N49. The helical transmembrane segment at 62-82 (PSFQDVHAMVFVGFGFLMVFL) threads the bilayer. The Cytoplasmic segment spans residues 83 to 86 (QRYG). Residues 87-107 (YSSLGFTFLLGAFALQWATLV) traverse the membrane as a helical segment. Topologically, residues 108–124 (QGFLHSFHGGHIHVGME) are extracellular. A helical transmembrane segment spans residues 125-145 (SLINADFCAGAVLISFGAVLG). Topologically, residues 146-149 (KTGP) are cytoplasmic. Residues 150-170 (AQLLLMALLEVALFGLNEFVL) traverse the membrane as a helical segment. The Extracellular segment spans residues 171 to 178 (LCLLGVRD). Residues 179 to 201 (AGGSMTIHTFGAYFGLVLSRVLY) traverse the membrane as a helical segment. At 202-219 (RPHLEKSQHRQGSVYHSD) the chain is on the cytoplasmic side. The helical transmembrane segment at 220–240 (LFAMIGTIFLWIFWPSFNSAL) threads the bilayer. Residues 241 to 251 (TSRGDGQPRTA) are Extracellular-facing. The chain crosses the membrane as a helical span at residues 252–272 (LNTYYSLTASTLSTFALSALV). Topologically, residues 273–282 (GKDGRLDMVH) are cytoplasmic. The helical transmembrane segment at 283–303 (VQNAALAGGVVVGTASEMMLT) threads the bilayer. Position 304 (P304) is a topological domain, extracellular. Residues 305-325 (FGALAAGCLAGAISTLGYKFF) form a helical membrane-spanning segment. At 326-346 (TPILESKLKIQDTCGVHNLHG) the chain is on the cytoplasmic side. A helical transmembrane segment spans residues 347-367 (MPGVLGALLGALMTGLTTHEA). Topologically, residues 368-393 (YGDGLQSVFPLIAEGQRSATSQAIYQ) are extracellular. A helical transmembrane segment spans residues 394–414 (LFGLSVTLLFASAGGVLGGLL). The Cytoplasmic portion of the chain corresponds to 415–458 (LKLPFLDAPPDSQCYEDQMCWEVPGEHGYEAQEALRVEEPDTEA). The segment at 416 to 424 (KLPFLDAPP) is interaction with ANK3. Residues 429 to 432 (YEDQ) carry the Basolateral sorting signal motif.

This sequence belongs to the ammonium transporter (TC 2.A.49) family. Rh subfamily. Interacts (via C-terminus) with ANK2 and ANK3; required for targeting to the basolateral membrane. In terms of processing, N-glycosylated.

The protein localises to the cell membrane. The protein resides in the basolateral cell membrane. The enzyme catalyses NH4(+)(in) = NH4(+)(out). It catalyses the reaction methylamine(out) = methylamine(in). The catalysed reaction is CO2(out) = CO2(in). Its function is as follows. Ammonium transporter involved in the maintenance of acid-base homeostasis. Transports ammonium and its related derivative methylammonium across the basolateral plasma membrane of epithelial cells likely contributing to renal transepithelial ammonia transport and ammonia metabolism. May transport either NH4(+) or NH3 ammonia species predominantly mediating an electrogenic NH4(+) transport. May act as a CO2 channel providing for renal acid secretion. This chain is Ammonium transporter Rh type B (RHBG), found in Oryctolagus cuniculus (Rabbit).